A 191-amino-acid polypeptide reads, in one-letter code: Protein GrpE (191 aa).

Positions 1 to 14 are enriched in polar residues; it reads MEDQKQTPSNQTAT. A disordered region spans residues 1-35; the sequence is MEDQKQTPSNQTATPAGDEATSTAAASPETGAPDT. Positions 19-35 are enriched in low complexity; sequence EATSTAAASPETGAPDT.

The protein belongs to the GrpE family. Homodimer.

The protein resides in the cytoplasm. Functionally, participates actively in the response to hyperosmotic and heat shock by preventing the aggregation of stress-denatured proteins, in association with DnaK and GrpE. It is the nucleotide exchange factor for DnaK and may function as a thermosensor. Unfolded proteins bind initially to DnaJ; upon interaction with the DnaJ-bound protein, DnaK hydrolyzes its bound ATP, resulting in the formation of a stable complex. GrpE releases ADP from DnaK; ATP binding to DnaK triggers the release of the substrate protein, thus completing the reaction cycle. Several rounds of ATP-dependent interactions between DnaJ, DnaK and GrpE are required for fully efficient folding. The sequence is that of Protein GrpE from Cupriavidus taiwanensis (strain DSM 17343 / BCRC 17206 / CCUG 44338 / CIP 107171 / LMG 19424 / R1) (Ralstonia taiwanensis (strain LMG 19424)).